A 70-amino-acid chain; its full sequence is Putative ankyrin repeat protein RC0502 (70 aa).

The ANK repeat unit spans residues 9 to 43 (KGRIPIHYATYSKQHEITQILILLQPGSEIDTVDN).

The chain is Putative ankyrin repeat protein RC0502 from Rickettsia conorii (strain ATCC VR-613 / Malish 7).